The chain runs to 120 residues: Large ribosomal subunit protein uL18 (120 aa).

This sequence belongs to the universal ribosomal protein uL18 family. Part of the 50S ribosomal subunit; part of the 5S rRNA/L5/L18/L25 subcomplex. Contacts the 5S and 23S rRNAs.

Its function is as follows. This is one of the proteins that bind and probably mediate the attachment of the 5S RNA into the large ribosomal subunit, where it forms part of the central protuberance. The protein is Large ribosomal subunit protein uL18 of Rhizobium johnstonii (strain DSM 114642 / LMG 32736 / 3841) (Rhizobium leguminosarum bv. viciae).